We begin with the raw amino-acid sequence, 379 residues long: Queuine tRNA-ribosyltransferase (379 aa).

Asp94 serves as the catalytic Proton acceptor. Residues 94 to 98 (DSGGF), Asp148, Gln191, and Gly218 each bind substrate. The segment at 249–255 (GVGSPDA) is RNA binding. Asp268 functions as the Nucleophile in the catalytic mechanism. The tract at residues 273–277 (TRIAR) is RNA binding; important for wobble base 34 recognition. Residues Cys306, Cys308, Cys311, and His337 each contribute to the Zn(2+) site.

This sequence belongs to the queuine tRNA-ribosyltransferase family. As to quaternary structure, homodimer. Within each dimer, one monomer is responsible for RNA recognition and catalysis, while the other monomer binds to the replacement base PreQ1. The cofactor is Zn(2+).

The enzyme catalyses 7-aminomethyl-7-carbaguanine + guanosine(34) in tRNA = 7-aminomethyl-7-carbaguanosine(34) in tRNA + guanine. The protein operates within tRNA modification; tRNA-queuosine biosynthesis. Catalyzes the base-exchange of a guanine (G) residue with the queuine precursor 7-aminomethyl-7-deazaguanine (PreQ1) at position 34 (anticodon wobble position) in tRNAs with GU(N) anticodons (tRNA-Asp, -Asn, -His and -Tyr). Catalysis occurs through a double-displacement mechanism. The nucleophile active site attacks the C1' of nucleotide 34 to detach the guanine base from the RNA, forming a covalent enzyme-RNA intermediate. The proton acceptor active site deprotonates the incoming PreQ1, allowing a nucleophilic attack on the C1' of the ribose to form the product. After dissociation, two additional enzymatic reactions on the tRNA convert PreQ1 to queuine (Q), resulting in the hypermodified nucleoside queuosine (7-(((4,5-cis-dihydroxy-2-cyclopenten-1-yl)amino)methyl)-7-deazaguanosine). This chain is Queuine tRNA-ribosyltransferase, found in Staphylococcus aureus (strain bovine RF122 / ET3-1).